Here is a 107-residue protein sequence, read N- to C-terminus: Biphenyl 2,3-dioxygenase, ferredoxin component (107 aa).

Residues 4–99 (TKICSSGDLA…VKLEGDDVLV (96 aa)) form the Rieske domain. [2Fe-2S] cluster contacts are provided by Cys43, His45, Cys62, and His65.

This sequence belongs to the bacterial ring-hydroxylating dioxygenase ferredoxin component family. In terms of assembly, the multicomponent biphenyl dioxygenase system is composed of a ferredoxin reductase (BphA4), a ferredoxin (BphA3), and a terminal oxygenase (BphA1A2). The cofactor is [2Fe-2S] cluster.

The protein operates within xenobiotic degradation; biphenyl degradation. Ferredoxin component of the biphenyl dioxygenase system that catalyzes the stereospecific dihydroxylation of the aromatic ring of biphenyl, yielding a dihydrodiol compound. Is likely involved in biphenyl degradation that allows growth of Rhodococcus sp. strain RHA1 on biphenyl as the sole source of carbon and energy. The dioxygenase system can also use naphtalene and 4-chlorobiphenyl (4-CB) as substrates, as well as some polychlorinated biphenyls (PCB) such as 2,2'-dichlorobiphenyl, 2,3-dichlorobiphenyl and 2,5,2'-trichlorobiphenyl. It exhibits weak activity toward dibenzofuran and dibenzo-p-dioxin. Electrons are transferred from NADH to the [2Fe-2S] cluster in BphA1 via FAD of BphA4 and [2Fe-2S] cluster of BphA3. The chain is Biphenyl 2,3-dioxygenase, ferredoxin component from Rhodococcus jostii (strain RHA1).